The following is a 246-amino-acid chain: 14-3-3 protein beta/alpha (246 aa).

The residue at position 1 (M1) is an N-acetylmethionine; in 14-3-3 protein beta/alpha; alternate. Residue M1 is modified to N-acetylmethionine. T2 carries the post-translational modification N-acetylthreonine; in 14-3-3 protein beta/alpha, N-terminally processed. Phosphothreonine is present on T2. K5 bears the N6-acetyllysine mark. The residue at position 51 (K51) is an N6-acetyllysine; alternate. A Glycyl lysine isopeptide (Lys-Gly) (interchain with G-Cter in SUMO2); alternate cross-link involves residue K51. Phosphoserine is present on S60. K70 is subject to N6-acetyllysine. A 3'-nitrotyrosine mark is found at Y84 and Y106. N6-acetyllysine is present on K117. S186 and S232 each carry phosphoserine.

It belongs to the 14-3-3 family. As to quaternary structure, homodimer. Interacts with SAMSN1 and PRKCE. Interacts with AKAP13. Interacts with SSH1 and TORC2/CRTC2. Interacts with ABL1; the interaction results in cytoplasmic location of ABL1 and inhibition of cABL-mediated apoptosis. Interacts with ROR2 (dimer); the interaction results in phosphorylation of YWHAB on tyrosine residues. Interacts with GAB2. Interacts with YAP1 (phosphorylated form). Interacts with the phosphorylated (by AKT1) form of SRPK2. Interacts with PKA-phosphorylated AANAT. Interacts with MYO1C. Interacts with SIRT2. Interacts with the 'Thr-369' phosphorylated form of DAPK2. Interacts with PI4KB, TBC1D22A and TBC1D22B. Interacts with the 'Ser-1134' and 'Ser-1161' phosphorylated form of SOS1. Interacts (via phosphorylated form) with YWHAB; this interaction occurs in a protein kinase AKT1-dependent manner. Interacts with SLITRK1. Interacts with SYNPO2 (phosphorylated form); YWHAB competes with ACTN2 for interaction with SYNPO2. Interacts with RIPOR2 (via phosphorylated form) isoform 2; this interaction occurs in a chemokine-dependent manner and does not compete for binding of RIPOR2 with RHOA nor blocks inhibition of RIPOR2-mediated RHOA activity. Interacts with MARK2 and MARK3. Interacts with TESK1; the interaction is dependent on the phosphorylation of TESK1 'Ser-437' and inhibits TESK1 kinase activity. Interacts with MEFV. Interacts with HDAC4. Interacts with ADAM22 (via C-terminus). (Microbial infection) Interacts with herpes simplex virus 1 protein UL46. In terms of assembly, (Microbial infection) Probably interacts with Chlamydia trachomatis protein IncG. In terms of processing, the alpha, brain-specific form differs from the beta form in being phosphorylated. Phosphorylated on Ser-60 by protein kinase C delta type catalytic subunit in a sphingosine-dependent fashion.

Its subcellular location is the cytoplasm. The protein resides in the melanosome. It is found in the vacuole membrane. Adapter protein implicated in the regulation of a large spectrum of both general and specialized signaling pathways. Binds to a large number of partners, usually by recognition of a phosphoserine or phosphothreonine motif. Binding generally results in the modulation of the activity of the binding partner. Negative regulator of osteogenesis. Blocks the nuclear translocation of the phosphorylated form (by AKT1) of SRPK2 and antagonizes its stimulatory effect on cyclin D1 expression resulting in blockage of neuronal apoptosis elicited by SRPK2. Negative regulator of signaling cascades that mediate activation of MAP kinases via AKAP13. The polypeptide is 14-3-3 protein beta/alpha (YWHAB) (Homo sapiens (Human)).